The sequence spans 190 residues: Cypemycin cysteine dehydrogenase (decarboxylating) (190 aa).

This sequence belongs to the HFCD (homooligomeric flavin containing Cys decarboxylase) superfamily.

It carries out the reaction [cypemycin](1-18)-L-Cys-L-Leu-L-Val-L-Cys + A = C(3,19),S(21)-[cypemycin](1-18)-L-Ala-L-Leu-N-thioethenyl-L-valinamide + hydrogen sulfide + AH2 + CO2. Functionally, involved in the biosynthesis of the lanaridin cypemycin. This is Cypemycin cysteine dehydrogenase (decarboxylating) from Streptomyces sp.